Consider the following 506-residue polypeptide: MGKGTVVGTAVVVCAAAAAAVGVAVVVSRRRRSKREAEEERRRRAAAVIEEVEQRFSTPTALLRGIADAMVEEMERGLRADPHAPLKMLISYVDNLPTGDEHGLFYALDLGGTNFRVIRVQLGGREKRVVSQQYEEVAIPPHLMVGTSMELFDFIAAELESFVKTEGEDFHLPEGRQRELGFTFSFPVHQTSISSGTLIKWTKGFSINGTVGEDVVAELSRAMERQGLDMKVTALVNDTVGTLAGGRYVDNDVAAAVILGTGTNAAYVEHANAIPKWTGLLPRSGNMVINMEWGNFKSERLPRSDYDNALDFESLNPGEQIYEKMISGMYLGEIVRRILLKLAHDASLFGDVVPTKLEQRFILRTPDMSAMHHDTSHDLKHLGAKLKDILGVADTSLEARYITLHVCDLVAERGARLAAAGIYGILKKLGRDRVPSDGSQKQRTVIALDGGLYEHYKKFRTCLEATLADLLGEEAASSVVVKLANDGSGIGAALLAASHSQYASVE.

Residues 6-26 (VVGTAVVVCAAAAAAVGVAVV) form a helical membrane-spanning segment. One can recognise a Hexokinase domain in the interval 43–497 (RRAAAVIEEV…SGIGAALLAA (455 aa)). The interval 98-236 (TGDEHGLFYA…GLDMKVTALV (139 aa)) is hexokinase small subdomain. G112, T113, and N114 together coordinate ADP. T202, K203, N237, and D238 together coordinate D-glucose. Residues 237-486 (NDTVGTLAGG…SSVVVKLAND (250 aa)) are hexokinase large subdomain. T261 contacts ADP. 3 residues coordinate D-glucose: N264, E292, and E323. G451 contributes to the ADP binding site.

This sequence belongs to the hexokinase family. In terms of tissue distribution, expressed in roots, leaves, flowers, immature seeds and endosperm.

It localises to the plastid. Its subcellular location is the chloroplast outer membrane. It carries out the reaction a D-hexose + ATP = a D-hexose 6-phosphate + ADP + H(+). It catalyses the reaction D-fructose + ATP = D-fructose 6-phosphate + ADP + H(+). The catalysed reaction is D-glucose + ATP = D-glucose 6-phosphate + ADP + H(+). It participates in carbohydrate metabolism; hexose metabolism. It functions in the pathway carbohydrate degradation; glycolysis; D-glyceraldehyde 3-phosphate and glycerone phosphate from D-glucose: step 1/4. Its function is as follows. Fructose and glucose phosphorylating enzyme. Functions as a glucose sensor for plant growth and photosynthesis. In Oryza sativa subsp. japonica (Rice), this protein is Hexokinase-6 (HXK6).